The sequence spans 1442 residues: Sulfite reductase [NADPH] subunit beta (1442 aa).

The 150-residue stretch at 682–831 (LHVYYASDGG…AYSEWEPKLW (150 aa)) folds into the Flavodoxin-like domain. Serine 903 carries the post-translational modification Phosphoserine. Residues cysteine 1300, cysteine 1306, cysteine 1345, and cysteine 1349 each contribute to the [4Fe-4S] cluster site. Cysteine 1349 lines the siroheme pocket.

Belongs to the nitrite and sulfite reductase 4Fe-4S domain family. As to quaternary structure, alpha(2)-beta(2). The alpha component is a flavoprotein, the beta component is a hemoprotein. It depends on siroheme as a cofactor. [4Fe-4S] cluster serves as cofactor.

The protein localises to the cytoplasm. It carries out the reaction hydrogen sulfide + 3 NADP(+) + 3 H2O = sulfite + 3 NADPH + 4 H(+). Its pathway is sulfur metabolism; hydrogen sulfide biosynthesis; hydrogen sulfide from sulfite (NADPH route): step 1/1. In terms of biological role, catalyzes the reduction of sulfite to sulfide, one of several activities required for the biosynthesis of L-cysteine from sulfate. In Saccharomyces cerevisiae (strain ATCC 204508 / S288c) (Baker's yeast), this protein is Sulfite reductase [NADPH] subunit beta (MET5).